The chain runs to 2005 residues: Sodium channel protein type 2 subunit alpha (2005 aa).

The Cytoplasmic portion of the chain corresponds to 1 to 129; it reads MARSVLVPPG…KLAIKILVHS (129 aa). A Phosphoserine modification is found at Ser4. The tract at residues 28-61 is disordered; it reads RIAEEKAKRPKQERKDEDDENGPKPNSDLEAGKS. A Glycyl lysine isopeptide (Lys-Gly) (interchain with G-Cter in SUMO1) cross-link involves residue Lys38. The I repeat unit spans residues 111–456; the sequence is ILTPFNPIRK…QQMLEQLKKQ (346 aa). Residues 130-148 traverse the membrane as a helical segment; sequence LFNVLIMCTILTNCVFMTM. Topologically, residues 149–155 are extracellular; sequence SNPPDWT. The chain crosses the membrane as a helical span at residues 156–176; the sequence is KNVEYTFTGIYTFESLIKILA. At 177 to 190 the chain is on the cytoplasmic side; it reads RGFCLEDFTFLRNP. A helical membrane pass occupies residues 191 to 208; the sequence is WNWLDFTVITFAYVTEFV. At 209 to 214 the chain is on the extracellular side; it reads NLGNVS. A glycan (N-linked (GlcNAc...) asparagine) is linked at Asn212. The helical transmembrane segment at 215 to 231 threads the bilayer; sequence ALRTFRVLRALKTISVI. Over 232–250 the chain is Cytoplasmic; the sequence is PGLKTIVGALIQSVKKLSD. A helical membrane pass occupies residues 251–270; that stretch reads VMILTVFCLSVFALIGLQLF. Residues 271-369 are Extracellular-facing; the sequence is MGNLRNKCLQ…PNYGYTSFDT (99 aa). Cys278 and Cys338 are oxidised to a cystine. Asn285, Asn291, Asn297, Asn303, Asn308, and Asn340 each carry an N-linked (GlcNAc...) asparagine glycan. The segment at residues 370-394 is an intramembrane region (pore-forming); sequence FSWAFLSLFRLMTQDFWENLYQLTL. Residues 395–401 are Extracellular-facing; that stretch reads RAAGKTY. A helical transmembrane segment spans residues 402–422; it reads MIFFVLVIFLGSFYLINLILA. The Cytoplasmic segment spans residues 423–759; the sequence is VVAMAYEEQN…HVVNLVVMDP (337 aa). Phosphoserine occurs at positions 468, 471, 484, 526, 528, 531, 553, 554, and 558. The tract at residues 494 to 529 is disordered; that stretch reads SSKSEKELKNRRKKKKQKEQAGEEEKEDAVRKSASE. Residues 511–529 are compositionally biased toward basic and acidic residues; the sequence is KEQAGEEEKEDAVRKSASE. Ser554 is modified (phosphoserine; by PKC; in vitro). Phosphoserine; by PKC; in vitro is present on residues Ser573 and Ser576. 6 positions are modified to phosphoserine: Ser589, Ser610, Ser623, Ser687, Ser688, and Ser721. The segment at 591-634 is disordered; that stretch reads NDFADDEHSTFEDNDSRRDSLFVPHRHGERRPSNVSQASRASRG. Positions 596-610 are enriched in basic and acidic residues; that stretch reads DEHSTFEDNDSRRDS. An II repeat occupies 741-1013; it reads CCKPWLKVKH…QIAVGRMQKG (273 aa). A helical membrane pass occupies residues 760 to 778; that stretch reads FVDLAITICIVLNTLFMAM. At 779–789 the chain is on the extracellular side; that stretch reads EHYPMTEQFSS. The chain crosses the membrane as a helical span at residues 790–809; it reads VLSVGNLVFTGIFTAEMFLK. Residues 810–823 lie on the Cytoplasmic side of the membrane; it reads IIAMDPYYYFQEGW. A helical transmembrane segment spans residues 824–843; that stretch reads NIFDGFIVSLSLMELGLANV. Residues 844–845 are Extracellular-facing; it reads EG. The helical transmembrane segment at 846 to 863 threads the bilayer; it reads LSVLRSFRLLRVFKLAKS. Residues 864–879 are Cytoplasmic-facing; it reads WPTLNMLIKIIGNSVG. A helical membrane pass occupies residues 880-898; sequence ALGNLTLVLAIIVFIFAVV. The Extracellular segment spans residues 899-927; it reads GMQLFGKSYKECVCKISNDCELPRWHMHH. An intrachain disulfide couples Cys912 to Cys918. The interval 917 to 918 is binds SCN2B; the sequence is DC. The pore-forming intramembrane region spans 928–948; sequence FFHSFLIVFRVLCGEWIETMW. The Extracellular segment spans residues 949–961; the sequence is DCMEVAGQTMCLT. A disulfide bridge connects residues Cys950 and Cys959. A helical transmembrane segment spans residues 962-982; sequence VFMMVMVIGNLVVLNLFLALL. At 983–1209 the chain is on the cytoplasmic side; the sequence is LSSFSSDNLA…TCYKIVEHNW (227 aa). The tract at residues 1120 to 1166 is disordered; it reads EEFSSESDMEESKEKLNATSSSEGSTVDIGAPAEGEQPEAEPEESLE. Residues 1155 to 1166 are compositionally biased toward acidic residues; that stretch reads EQPEAEPEESLE. The stretch at 1190–1504 is one III repeat; that stretch reads KGKLWWNLRK…KKYYNAMKKL (315 aa). Residues 1210–1227 traverse the membrane as a helical segment; it reads FETFIVFMILLSSGALAF. Residues 1228–1240 lie on the Extracellular side of the membrane; that stretch reads EDIYIEQRKTIKT. The helical transmembrane segment at 1241-1259 threads the bilayer; the sequence is MLEYADKVFTYIFILEMLL. Topologically, residues 1260–1273 are cytoplasmic; that stretch reads KWVAYGFQMYFTNA. The chain crosses the membrane as a helical span at residues 1274–1292; sequence WCWLDFLIVDVSLVSLTAN. Residues 1293-1300 are Extracellular-facing; it reads ALGYSELG. The helical transmembrane segment at 1301-1319 threads the bilayer; that stretch reads AIKSLRTLRALRPLRALSR. Residues 1320–1336 lie on the Cytoplasmic side of the membrane; sequence FEGMRVVVNALLGAIPS. Residues 1337 to 1356 form a helical membrane-spanning segment; the sequence is IMNVLLVCLIFWLIFSIMGV. Residues 1357–1408 are Extracellular-facing; that stretch reads NLFAGKFYHCINYTTGEMFDVSVVNNYSECQALIESNQTARWKNVKVNFDNV. Cys1366 and Cys1386 form a disulfide bridge. 3 N-linked (GlcNAc...) asparagine glycosylation sites follow: Asn1368, Asn1382, and Asn1393. The segment at residues 1409–1430 is an intramembrane region (pore-forming); sequence GLGYLSLLQVATFKGWMDIMYA. The Extracellular segment spans residues 1431–1447; it reads AVDSRNVELQPKYEDNL. Residues 1448-1469 form a helical membrane-spanning segment; that stretch reads YMYLYFVIFIIFGSFFTLNLFI. The Cytoplasmic portion of the chain corresponds to 1470 to 1532; the sequence is GVIIDNFNQQ…MVFDFVTKQV (63 aa). Ser1506 bears the Phosphoserine; by PKC mark. Residues 1513–1811 form an IV repeat; the sequence is IPRPANKFQG…WEKFDPDATQ (299 aa). A helical membrane pass occupies residues 1533–1550; the sequence is FDISIMILICLNMVTMMV. At 1551 to 1561 the chain is on the extracellular side; sequence ETDDQSQEMTN. A helical transmembrane segment spans residues 1562–1580; sequence ILYWINLVFIVLFTGECVL. The Cytoplasmic segment spans residues 1581-1592; it reads KLISLRHYYFTI. The chain crosses the membrane as a helical span at residues 1593-1610; the sequence is GWNIFDFVVVILSIVGMF. Topologically, residues 1611–1623 are extracellular; it reads LAELIEKYFVSPT. The helical transmembrane segment at 1624–1640 threads the bilayer; sequence LFRVIRLARIGRILRLI. Over 1641 to 1659 the chain is Cytoplasmic; the sequence is KGAKGIRTLLFALMMSLPA. A helical membrane pass occupies residues 1660 to 1677; the sequence is LFNIGLLLFLVMFIYAIF. Over 1678–1699 the chain is Extracellular; sequence GMSNFAYVKREVGIDDMFNFET. An intramembrane region (pore-forming) is located at residues 1700 to 1722; it reads FGNSMICLFQITTSAGWDGLLAP. Residues 1723 to 1752 are Extracellular-facing; sequence ILNSGPPDCDPEKDHPGSSVKGDCGNPSVG. Cys1731 and Cys1746 form a disulfide bridge. Residues 1753 to 1775 traverse the membrane as a helical segment; that stretch reads IFFFVSYIIISFLVVVNMYIAVI. The Cytoplasmic portion of the chain corresponds to 1776–2005; sequence LENFSVATEE…KGKDIRESKK (230 aa). The 30-residue stretch at 1905–1934 folds into the IQ domain; the sequence is EEVSAIVIQRAYRRYLLKQKVKKVSSIYKK. Ser1930 bears the Phosphoserine mark. The span at 1933–1964 shows a compositional bias: basic and acidic residues; sequence KKDKGKEDEGTPIKEDIITDKLNENSTPEKTD. Positions 1933-2005 are disordered; it reads KKDKGKEDEG…KGKDIRESKK (73 aa). A phosphothreonine mark is found at Thr1943, Thr1963, and Thr1966. Ser1971 bears the Phosphoserine mark. Positions 1979-2005 are enriched in basic and acidic residues; sequence TKPEKEKFEKDKSEKEDKGKDIRESKK.

The protein belongs to the sodium channel (TC 1.A.1.10) family. Nav1.2/SCN2A subfamily. As to quaternary structure, heterooligomer of a large alpha subunit and a smaller beta subunit. Heterooligomer with SCN2B or SCN4B; disulfide-linked. Heterooligomer with SCN1B or SCN3B; non-covalently linked. Interacts with NEDD4L. Interacts with CALM. Interacts with TMEM233. Interacts with the conotoxin GVIIJ. Interacts with the scorpion toxin BMK M1. May be ubiquitinated by NEDD4L; which would promote its endocytosis. In terms of processing, phosphorylation at Ser-1506 by PKC in a highly conserved cytoplasmic loop slows inactivation of the sodium channel and reduces peak sodium currents. Post-translationally, sumoylated at Lys-38. Sumoylation is induced by hypoxia, increases voltage-gated sodium current and mediates the early response to acute hypoxia in neurons. Sumoylated SCN2A is located at the cell membrane. Expressed in brain (at protein level). Expressed in cerebellar granule neurons (at protein level).

Its subcellular location is the cell membrane. The enzyme catalyses Na(+)(in) = Na(+)(out). In terms of biological role, mediates the voltage-dependent sodium ion permeability of excitable membranes. Assuming opened or closed conformations in response to the voltage difference across the membrane, the protein forms a sodium-selective channel through which Na(+) ions may pass in accordance with their electrochemical gradient. Implicated in the regulation of hippocampal replay occurring within sharp wave ripples (SPW-R) important for memory. The chain is Sodium channel protein type 2 subunit alpha from Rattus norvegicus (Rat).